Here is a 37-residue protein sequence, read N- to C-terminus: Large ribosomal subunit protein bL36 (37 aa).

It belongs to the bacterial ribosomal protein bL36 family.

This is Large ribosomal subunit protein bL36 from Mycobacterium leprae (strain Br4923).